The primary structure comprises 689 residues: Glycine--tRNA ligase beta subunit (689 aa).

Belongs to the class-II aminoacyl-tRNA synthetase family. In terms of assembly, tetramer of two alpha and two beta subunits.

The protein resides in the cytoplasm. The catalysed reaction is tRNA(Gly) + glycine + ATP = glycyl-tRNA(Gly) + AMP + diphosphate. The sequence is that of Glycine--tRNA ligase beta subunit from Dictyoglomus thermophilum (strain ATCC 35947 / DSM 3960 / H-6-12).